A 610-amino-acid polypeptide reads, in one-letter code: E3 ubiquitin-protein ligase hrd-1 (610 aa).

The first 23 residues, 1–23, serve as a signal peptide directing secretion; it reads MRVSAGLMIGGSCVATAATILNA. Residues 24 to 41 are Lumenal-facing; that stretch reads FLINKQFYPSIVYLSKSN. The chain crosses the membrane as a helical span at residues 42–62; sequence ASMAVIYVQGIVLVYLMFQLL. Over 63–99 the chain is Cytoplasmic; that stretch reads KSILFGDLRAAEAEHLSERTWHAVLETCLAFTVFRDD. A helical membrane pass occupies residues 100–120; that stretch reads FSAIFVMQFIGLLFIKCFHWL. Topologically, residues 121–144 are lumenal; that stretch reads ADDRVDMMERSPVITLRFHLRMMT. Residues 145–165 form a helical membrane-spanning segment; that stretch reads VLAALGFADSYFVSSAYFTTI. The Cytoplasmic segment spans residues 166 to 170; it reads TRGAS. The helical transmembrane segment at 171–191 threads the bilayer; the sequence is AQIVFGFEYAILLALVLHVTI. Residues 192-215 are Lumenal-facing; it reads KYLLHMHDLRNPQSWDNKAVYLLY. The helical transmembrane segment at 216–236 threads the bilayer; that stretch reads AELFINLIRCLLYGFFAVVML. Residues 237–610 are Cytoplasmic-facing; the sequence is RVHTFPLFSV…ARLLGENANQ (374 aa). The RING-type; atypical zinc-finger motif lies at 292 to 333; the sequence is CIICREEMTVDASPKRLPCSHVFHAHCLRSWFQRQQTCPTCR. Disordered regions lie at residues 386 to 408, 452 to 480, and 521 to 610; these read QPAG…GPFP, VNTT…LRRM, and RPVV…NANQ. Residues 452–474 show a composition bias toward polar residues; it reads VNTTQGTSSETPPVNPSYSQLST. The segment covering 560 to 589 has biased composition (low complexity); it reads TESPSTSSTAPSTSSPVTASSTPTTSSTRT.

This sequence belongs to the HRD1 family. Homodimer.

The protein localises to the endoplasmic reticulum membrane. It carries out the reaction S-ubiquitinyl-[E2 ubiquitin-conjugating enzyme]-L-cysteine + [acceptor protein]-L-lysine = [E2 ubiquitin-conjugating enzyme]-L-cysteine + N(6)-ubiquitinyl-[acceptor protein]-L-lysine.. The protein operates within protein modification; protein ubiquitination. Acts as an E3 ubiquitin-protein ligase which accepts ubiquitin specifically from endoplasmic reticulum-associated ubc-7 E2 ligase and transfers it to substrates, promoting their degradation. Component of the endoplasmic reticulum quality control (ERQC) system, which is also called the ER-associated degradation (ERAD) system, involved in ubiquitin-dependent degradation of misfolded endoplasmic reticulum proteins. Also promotes the degradation of normal but naturally short-lived proteins. Protects cells from ER stress-induced apoptosis. Thought to play a role together with hsp-3 in developmental growth and function of intestinal cells and to play a role together with hsp-4 in gonad formation. Plays a key role in the degradation of the potassium channel slo-1, perhaps acting directly, in targeting slo-1 to the ER-associated degradation pathway (ERAD), and also indirectly, via activation of the transcription factor skn-1, which mediates proteasomal homeostasis. The polypeptide is E3 ubiquitin-protein ligase hrd-1 (sel-11) (Caenorhabditis elegans).